Reading from the N-terminus, the 803-residue chain is Translation initiation factor IF-2 (803 aa).

Disordered stretches follow at residues 95 to 125 and 138 to 178; these read PVVE…EKAE and EVKE…EREE. The segment covering 111–121 has biased composition (polar residues); sequence VPLTSDTTNLN. Residues 138–155 are compositionally biased toward basic and acidic residues; the sequence is EVKEEAKKTPSEKKETPK. The segment covering 156–167 has biased composition (basic residues); the sequence is KGPRKETRRSRK. A compositionally biased stretch (basic and acidic residues) spans 168 to 178; it reads PDKEDKWEREE. Residues 302 to 471 enclose the tr-type G domain; it reads PRAPVVTIMG…LLQAEVLELK (170 aa). The tract at residues 311 to 318 is G1; it reads GHVDHGKT. 311–318 is a GTP binding site; it reads GHVDHGKT. The tract at residues 336–340 is G2; that stretch reads GITQH. The segment at 357–360 is G3; that stretch reads DTPG. GTP-binding positions include 357-361 and 411-414; these read DTPGH and NKID. The interval 411 to 414 is G4; that stretch reads NKID. Residues 447-449 form a G5 region; sequence SAK.

It belongs to the TRAFAC class translation factor GTPase superfamily. Classic translation factor GTPase family. IF-2 subfamily.

The protein resides in the cytoplasm. One of the essential components for the initiation of protein synthesis. Protects formylmethionyl-tRNA from spontaneous hydrolysis and promotes its binding to the 30S ribosomal subunits. Also involved in the hydrolysis of GTP during the formation of the 70S ribosomal complex. The protein is Translation initiation factor IF-2 of Coxiella burnetii (strain RSA 331 / Henzerling II).